A 250-amino-acid chain; its full sequence is Phosphoribosylaminoimidazole-succinocarboxamide synthase (250 aa).

This sequence belongs to the SAICAR synthetase family.

It catalyses the reaction 5-amino-1-(5-phospho-D-ribosyl)imidazole-4-carboxylate + L-aspartate + ATP = (2S)-2-[5-amino-1-(5-phospho-beta-D-ribosyl)imidazole-4-carboxamido]succinate + ADP + phosphate + 2 H(+). The protein operates within purine metabolism; IMP biosynthesis via de novo pathway; 5-amino-1-(5-phospho-D-ribosyl)imidazole-4-carboxamide from 5-amino-1-(5-phospho-D-ribosyl)imidazole-4-carboxylate: step 1/2. The protein is Phosphoribosylaminoimidazole-succinocarboxamide synthase of Bifidobacterium adolescentis (strain ATCC 15703 / DSM 20083 / NCTC 11814 / E194a).